Consider the following 339-residue polypeptide: MAGRVKIKQKELIDSTVKNKNVMNLFHEIIGSKGNINFSVVWPKFKKIKQSVYDYISTLSVLEKASVMQNFEADKKLLELFVQKLWAAYEGYFKYPEIEKYEVEGQVNFNLVPQCVLEKFSQLYRIRINSELVTLILNSCAFMSKYNDYILKKDPYILTITPGLCFSPIPNFEDLNFKHLYNSDKNSQHDKEFIMFILYKLYTAALGVYNAISIPDIDVEDLENIILSSVSQIKKQIPRCKDAFNKIESSVHLLRKNFNTYYSDYVGSGYNPTIIMEQYIKDISQDSKNISPRISYQFRTIIKYYRDMIATRHQTMDPQVLNLVKHVEKKLDMLDREKN.

The protein belongs to the asfivirus H339R family. Interacts with NACA (alpha chain of nascent polypeptide-associated complex).

Its subcellular location is the host cytoplasm. The protein localises to the host nucleus. It localises to the virion. This chain is Protein H339R, found in African swine fever virus (strain Badajoz 1971 Vero-adapted) (Ba71V).